A 197-amino-acid chain; its full sequence is Xanthine phosphoribosyltransferase (197 aa).

The xanthine site is built by leucine 20 and asparagine 27. Alanine 128–alanine 132 is a 5-phospho-alpha-D-ribose 1-diphosphate binding site. A xanthine-binding site is contributed by lysine 156.

The protein belongs to the purine/pyrimidine phosphoribosyltransferase family. Xpt subfamily. As to quaternary structure, homodimer.

Its subcellular location is the cytoplasm. The catalysed reaction is XMP + diphosphate = xanthine + 5-phospho-alpha-D-ribose 1-diphosphate. It functions in the pathway purine metabolism; XMP biosynthesis via salvage pathway; XMP from xanthine: step 1/1. In terms of biological role, converts the preformed base xanthine, a product of nucleic acid breakdown, to xanthosine 5'-monophosphate (XMP), so it can be reused for RNA or DNA synthesis. The polypeptide is Xanthine phosphoribosyltransferase (Bacillus mycoides (strain KBAB4) (Bacillus weihenstephanensis)).